The primary structure comprises 403 residues: Serine/threonine transporter SstT (403 aa).

Transmembrane regions (helical) follow at residues 15 to 35, 49 to 69, 85 to 105, 142 to 162, 183 to 203, 218 to 238, 246 to 268, 289 to 309, 317 to 337, and 362 to 382; these read LGLIPQIVIGIALGVGVAIVW, FISALKAVAPILVFLLVMTAI, LLYVVGTLCAALVAVLASFIF, ALLNANFVGILAWAMGLGMML, IVQLVIRCAPLGIFGLVAGTL, LAVIVGCMLFVALVTNPLIVF, YPLVFACLRGSAITAFFTRSSAA, ISIPLGATINMAGAAVTISVI, LGIGVDFATALLLCVVASLAA, and PDVAMQVVAIGFVISVVQDAT.

It belongs to the dicarboxylate/amino acid:cation symporter (DAACS) (TC 2.A.23) family.

Its subcellular location is the cell inner membrane. The catalysed reaction is L-serine(in) + Na(+)(in) = L-serine(out) + Na(+)(out). It carries out the reaction L-threonine(in) + Na(+)(in) = L-threonine(out) + Na(+)(out). Its function is as follows. Involved in the import of serine and threonine into the cell, with the concomitant import of sodium (symport system). This is Serine/threonine transporter SstT from Chromohalobacter salexigens (strain ATCC BAA-138 / DSM 3043 / CIP 106854 / NCIMB 13768 / 1H11).